A 148-amino-acid chain; its full sequence is Lysozyme C (148 aa).

The first 18 residues, 1–18, serve as a signal peptide directing secretion; sequence MKAVIILGLVLLSVTVQG. Residues 19-148 enclose the C-type lysozyme domain; that stretch reads KIFERCELAR…VSQYVQGCGV (130 aa). 4 disulfide bridges follow: C24/C146, C48/C134, C83/C99, and C95/C113. Active-site residues include E53 and D71.

The protein belongs to the glycosyl hydrolase 22 family. As to quaternary structure, monomer.

The catalysed reaction is Hydrolysis of (1-&gt;4)-beta-linkages between N-acetylmuramic acid and N-acetyl-D-glucosamine residues in a peptidoglycan and between N-acetyl-D-glucosamine residues in chitodextrins.. Its function is as follows. Lysozymes have primarily a bacteriolytic function; those in tissues and body fluids are associated with the monocyte-macrophage system and enhance the activity of immunoagents. This Erythrocebus patas (Red guenon) protein is Lysozyme C (LYZ).